The chain runs to 548 residues: Membrane protein insertase YidC (548 aa).

Residues asparagine 6–aspartate 26 form a helical membrane-spanning segment. The tract at residues asparagine 28–glycine 56 is disordered. Residues proline 29–threonine 42 are compositionally biased toward low complexity. A run of 4 helical transmembrane segments spans residues phenylalanine 350–tyrosine 370, phenylalanine 424–isoleucine 444, leucine 458–isoleucine 478, and proline 499–valine 519.

The protein belongs to the OXA1/ALB3/YidC family. Type 1 subfamily. In terms of assembly, interacts with the Sec translocase complex via SecD. Specifically interacts with transmembrane segments of nascent integral membrane proteins during membrane integration.

The protein localises to the cell inner membrane. In terms of biological role, required for the insertion and/or proper folding and/or complex formation of integral membrane proteins into the membrane. Involved in integration of membrane proteins that insert both dependently and independently of the Sec translocase complex, as well as at least some lipoproteins. Aids folding of multispanning membrane proteins. The protein is Membrane protein insertase YidC of Salmonella typhimurium (strain LT2 / SGSC1412 / ATCC 700720).